The chain runs to 222 residues: MSTPRQILAAIFDMDGLLIDSEPLWDRAELDVMASLGVDISRRNELPDTLGLRIDMVVDLWYARQPWNGPSRQEVVERVIARAISLVEETRPLLPGVREAVALCKEQGLLVGLASASPLHMLEKVLTMFDLRDSFDALASAEKLPYSKPHPQVYLDCAAKLGVDPLTCVALEDSVNGMIASKAARMRSIVVPAPEAQNDPRFVLADVKLSSLTELTAKDLLG.

Catalysis depends on Asp-13, which acts as the Nucleophile. Residues Asp-13 and Asp-15 each contribute to the a divalent metal cation site. Residues 13-15 (DMD), 115-116 (SA), and Lys-148 each bind substrate. Asp-15 acts as the Proton donor in catalysis. Asp-173 provides a ligand contact to a divalent metal cation.

It belongs to the HAD-like hydrolase superfamily. CbbY/CbbZ/Gph/YieH family. Mg(2+) serves as cofactor. It depends on Mn(2+) as a cofactor. The cofactor is Co(2+). Requires Zn(2+) as cofactor.

The catalysed reaction is sugar phosphate + H2O = sugar + phosphate.. It catalyses the reaction 2-deoxy-D-glucose 6-phosphate + H2O = 2-deoxy-D-glucose + phosphate. The enzyme catalyses D-mannitol 1-phosphate + H2O = D-mannitol + phosphate. It carries out the reaction D-sorbitol 6-phosphate + H2O = D-sorbitol + phosphate. Its function is as follows. Sugar-phosphate phosphohydrolase that catalyzes the dephosphorylation of D-mannitol 1-phosphate and D-sorbitol 6-phosphate. Also catalyzes the dephosphorylation of 2-deoxyglucose 6-phosphate (2dGlu6P); this is a biologically important activity in vivo since it contributes to the elimination of this toxic compound and plays an important role in the resistance of E.coli to 2-deoxyglucose. To a lesser extent, is also able to dephosphorylate mannose 6-phosphate (Man6P), erythrose-4-phosphate, 2-deoxyribose-5-phosphate (2dRib5P), ribose-5-phosphate (Rib5P) and glucose-6-phosphate (Glu6P) in vitro. The polypeptide is Hexitol phosphatase B (Escherichia coli (strain K12)).